The following is a 513-amino-acid chain: ATP synthase subunit alpha (513 aa).

Position 169–176 (169–176) interacts with ATP; that stretch reads GDRQTGKT.

Belongs to the ATPase alpha/beta chains family. In terms of assembly, F-type ATPases have 2 components, CF(1) - the catalytic core - and CF(0) - the membrane proton channel. CF(1) has five subunits: alpha(3), beta(3), gamma(1), delta(1), epsilon(1). CF(0) has three main subunits: a(1), b(2) and c(9-12). The alpha and beta chains form an alternating ring which encloses part of the gamma chain. CF(1) is attached to CF(0) by a central stalk formed by the gamma and epsilon chains, while a peripheral stalk is formed by the delta and b chains.

Its subcellular location is the cell inner membrane. The catalysed reaction is ATP + H2O + 4 H(+)(in) = ADP + phosphate + 5 H(+)(out). In terms of biological role, produces ATP from ADP in the presence of a proton gradient across the membrane. The alpha chain is a regulatory subunit. This Haemophilus ducreyi (strain 35000HP / ATCC 700724) protein is ATP synthase subunit alpha.